We begin with the raw amino-acid sequence, 905 residues long: Coatomer subunit beta' (905 aa).

WD repeat units lie at residues 13-52, 55-94, 97-136, 140-180, 183-224, 227-266, 350-388, and 390-425; these read ARSD…LVKT, VCDL…RVHM, AHSD…SCSQ, GHTH…PNFT, GHEK…CVQT, GHAQ…LEST, SCEI…NKSF, and SAQE…KSFK. K627 carries the post-translational modification N6-acetyllysine. Residues 746 to 783 form a WD 9 repeat; the sequence is IRTGRLPEAAFLARTYLPSQVSRVVKLWRENLSKVNQK. The disordered stretch occupies residues 837-873; that stretch reads EEAKGFQPSRPTAQQEPDGKPASSPVIMASQTTHKEE. The residue at position 859 (S859) is a Phosphoserine. Residues 867–891 are a coiled coil; the sequence is QTTHKEEKSLLELEVDLDNLELEDI.

This sequence belongs to the WD repeat COPB2 family. As to quaternary structure, oligomeric complex that consists of at least the alpha, beta, beta', gamma, delta, epsilon and zeta subunits. Probably interacts with PEX11A. Interacts with SCYL1. Interacts with JAGN1.

Its subcellular location is the cytoplasm. The protein localises to the cytosol. The protein resides in the golgi apparatus membrane. It localises to the cytoplasmic vesicle. It is found in the COPI-coated vesicle membrane. Its function is as follows. The coatomer is a cytosolic protein complex that binds to dilysine motifs and reversibly associates with Golgi non-clathrin-coated vesicles, which further mediate biosynthetic protein transport from the ER, via the Golgi up to the trans Golgi network. Coatomer complex is required for budding from Golgi membranes, and is essential for the retrograde Golgi-to-ER transport of dilysine-tagged proteins. In mammals, the coatomer can only be recruited by membranes associated to ADP-ribosylation factors (ARFs), which are small GTP-binding proteins; the complex also influences the Golgi structural integrity, as well as the processing, activity, and endocytic recycling of LDL receptors. This coatomer complex protein, essential for Golgi budding and vesicular trafficking, is a selective binding protein (RACK) for protein kinase C, epsilon type. It binds to Golgi membranes in a GTP-dependent manner. The sequence is that of Coatomer subunit beta' (Copb2) from Mus musculus (Mouse).